Here is a 733-residue protein sequence, read N- to C-terminus: Submandibular gland protein C (733 aa).

A signal peptide spans 1–20; that stretch reads MKLILLYLAVVLCFVGKARS. The segment at 48–91 is disordered; that stretch reads KSSGGSKDYNLSDGGKSNSRKNLSPATGGSATQQSNLDDSHAPN. N57 is a glycosylation site (N-linked (GlcNAc...) asparagine). Polar residues predominate over residues 62–84; it reads GKSNSRKNLSPATGGSATQQSNL. N141 and N187 each carry an N-linked (GlcNAc...) asparagine glycan. Disordered regions lie at residues 172-204, 249-330, 369-450, and 496-733; these read GQQA…ADKP, LTED…NSSN, and SVTE…PSVA. A compositionally biased stretch (polar residues) spans 186–199; the sequence is ENSSLSTGSATSNK. Residues 256–270 are compositionally biased toward low complexity; sequence TSTSASVSGDSSTSS. A compositionally biased stretch (polar residues) spans 300–318; the sequence is GSKQNVEDSTLSTGSATSN. Residue N327 is glycosylated (N-linked (GlcNAc...) asparagine). A compositionally biased stretch (low complexity) spans 376-390; it reads TSTSASVSGDSSTSS. Over residues 420 to 438 the composition is skewed to polar residues; that stretch reads GSKQNVEDSTLSTGSATSN. N447, N514, and N528 each carry an N-linked (GlcNAc...) asparagine glycan. Polar residues-rich tracts occupy residues 496–516 and 525–535; these read SVTE…NNLS and NPTNGSSSASS. Basic and acidic residues predominate over residues 538 to 552; it reads KPYEEGMRKLLKFLE. Composition is skewed to low complexity over residues 563–574 and 609–619; these read SVSGMSSESSRS and SSNSSTGSATS. A glycan (N-linked (GlcNAc...) asparagine) is linked at N611. Gly residues predominate over residues 654-665; sequence GFNGPEGVGENN. The span at 677–701 shows a compositional bias: low complexity; it reads GSKSDSGSHNLSSGSGSRSNVSTGG. 2 N-linked (GlcNAc...) asparagine glycosylation sites follow: N686 and N696. The segment covering 722–733 has biased composition (polar residues); sequence TGKTQSGSPSVA.

N-glycosylated. Detected in terminal tubule cells of the submandibular gland (at protein level). Expressed in submandibular salivary glands of 3-day-old males but not adults. Expression in adult submandibular glands is restricted to females. Isoform 5 is expressed in both 3-day-old and adult sublingual glands.

It localises to the secreted. The chain is Submandibular gland protein C (Muc19) from Mus musculus (Mouse).